A 696-amino-acid polypeptide reads, in one-letter code: DNA ligase (696 aa).

Residues 36–40 (DAEYD), 85–86 (SL), and E123 contribute to the NAD(+) site. The active-site N6-AMP-lysine intermediate is K125. R146, E181, K319, and K343 together coordinate NAD(+). Positions 437, 440, 455, and 461 each coordinate Zn(2+). One can recognise a BRCT domain in the interval 618 to 696 (PEGTSLAGKT…EDGLKALLGL (79 aa)).

It belongs to the NAD-dependent DNA ligase family. LigA subfamily. Requires Mg(2+) as cofactor. It depends on Mn(2+) as a cofactor.

It carries out the reaction NAD(+) + (deoxyribonucleotide)n-3'-hydroxyl + 5'-phospho-(deoxyribonucleotide)m = (deoxyribonucleotide)n+m + AMP + beta-nicotinamide D-nucleotide.. In terms of biological role, DNA ligase that catalyzes the formation of phosphodiester linkages between 5'-phosphoryl and 3'-hydroxyl groups in double-stranded DNA using NAD as a coenzyme and as the energy source for the reaction. It is essential for DNA replication and repair of damaged DNA. The chain is DNA ligase from Bordetella parapertussis (strain 12822 / ATCC BAA-587 / NCTC 13253).